The primary structure comprises 267 residues: uncharacterized protein (267 aa).

This sequence belongs to the lin-8 family.

This is an uncharacterized protein from Caenorhabditis elegans.